Reading from the N-terminus, the 179-residue chain is MLCAGNGGKELPRAKVFEGGSLVSKDYEDLKRRYFGTEHGNVLFLDPFETVYLTEKGEIDPETPEGEPMSVEELLSFFERRRPGFRAGYVVYRDLTERGYVVKSGFKYGGRFRVYEEDPDREHSKYVVRVVEPDTELSTRDVLRATRLAHSVRKDFVLAVVEDVEEPRIEYVMWRWKRL.

Active-site residues include tyrosine 115, histidine 123, and lysine 154.

The protein belongs to the tRNA-intron endonuclease family. Archaeal short subfamily. Homotetramer; although the tetramer contains four active sites, only two participate in the cleavage. Therefore, it should be considered as a dimer of dimers.

It catalyses the reaction pretRNA = a 3'-half-tRNA molecule with a 5'-OH end + a 5'-half-tRNA molecule with a 2',3'-cyclic phosphate end + an intron with a 2',3'-cyclic phosphate and a 5'-hydroxyl terminus.. Endonuclease that removes tRNA introns. Cleaves pre-tRNA at the 5'- and 3'-splice sites to release the intron. The products are an intron and two tRNA half-molecules bearing 2',3' cyclic phosphate and 5'-OH termini. Recognizes a pseudosymmetric substrate in which 2 bulged loops of 3 bases are separated by a stem of 4 bp. The sequence is that of tRNA-splicing endonuclease from Methanopyrus kandleri (strain AV19 / DSM 6324 / JCM 9639 / NBRC 100938).